The following is a 446-amino-acid chain: Glutamate--tRNA ligase (446 aa).

Positions 9–19 (PSPTGLLHVGN) match the 'HIGH' region motif. The short motif at 240–244 (GLSKR) is the 'KMSKS' region element. ATP is bound at residue K243.

The protein belongs to the class-I aminoacyl-tRNA synthetase family. Glutamate--tRNA ligase type 1 subfamily. Monomer.

It is found in the cytoplasm. It catalyses the reaction tRNA(Glu) + L-glutamate + ATP = L-glutamyl-tRNA(Glu) + AMP + diphosphate. Functionally, catalyzes the attachment of glutamate to tRNA(Glu) in a two-step reaction: glutamate is first activated by ATP to form Glu-AMP and then transferred to the acceptor end of tRNA(Glu). The protein is Glutamate--tRNA ligase of Azospirillum brasilense.